We begin with the raw amino-acid sequence, 251 residues long: Hydroxyacylglutathione hydrolase (251 aa).

Residues H59, H61, D63, H64, H118, D141, and H179 each coordinate Zn(2+).

This sequence belongs to the metallo-beta-lactamase superfamily. Glyoxalase II family. As to quaternary structure, monomer. Requires Zn(2+) as cofactor.

The enzyme catalyses an S-(2-hydroxyacyl)glutathione + H2O = a 2-hydroxy carboxylate + glutathione + H(+). It functions in the pathway secondary metabolite metabolism; methylglyoxal degradation; (R)-lactate from methylglyoxal: step 2/2. Thiolesterase that catalyzes the hydrolysis of S-D-lactoyl-glutathione to form glutathione and D-lactic acid. The sequence is that of Hydroxyacylglutathione hydrolase from Prochlorococcus marinus (strain NATL2A).